A 172-amino-acid polypeptide reads, in one-letter code: C-phycocyanin beta subunit (172 aa).

Asn-72 bears the N4-methylasparagine mark. Positions 82 and 153 each coordinate (2R,3E)-phycocyanobilin.

It belongs to the phycobiliprotein family. Heterodimer of an alpha and a beta chain, which further assembles into trimers. The trimers assemble into hexamers, although these were not seen in the crystallographic studies. Part of 2 PBS rod complexes, the conventional CpcG-PBS rod and a photosystem I-specific CpcL-PBS rod, both of which include ferredoxin--NADP reductase (petH). Interacts with rod linker CpcC2 via the latter's N-terminal PBS-linker domain. Contains two covalently linked bilin chromophores.

It localises to the cellular thylakoid membrane. Functionally, light-harvesting photosynthetic bile pigment-protein from the phycobiliprotein complex (phycobilisome, PBS). Phycocyanin is the major phycobiliprotein in the PBS rod. This Synechocystis sp. (strain ATCC 27184 / PCC 6803 / Kazusa) protein is C-phycocyanin beta subunit (cpcB).